Here is a 502-residue protein sequence, read N- to C-terminus: Lysine--tRNA ligase (502 aa).

The Mg(2+) site is built by glutamate 409 and glutamate 416.

This sequence belongs to the class-II aminoacyl-tRNA synthetase family. Homodimer. The cofactor is Mg(2+).

The protein resides in the cytoplasm. It catalyses the reaction tRNA(Lys) + L-lysine + ATP = L-lysyl-tRNA(Lys) + AMP + diphosphate. The chain is Lysine--tRNA ligase from Prochlorococcus marinus (strain SARG / CCMP1375 / SS120).